Reading from the N-terminus, the 206-residue chain is Small ribosomal subunit protein uS4 (206 aa).

One can recognise an S4 RNA-binding domain in the interval 96 to 157; sequence SRLDNVVYRM…KAKNQARIQN (62 aa).

It belongs to the universal ribosomal protein uS4 family. As to quaternary structure, part of the 30S ribosomal subunit. Contacts protein S5. The interaction surface between S4 and S5 is involved in control of translational fidelity.

In terms of biological role, one of the primary rRNA binding proteins, it binds directly to 16S rRNA where it nucleates assembly of the body of the 30S subunit. Functionally, with S5 and S12 plays an important role in translational accuracy. The polypeptide is Small ribosomal subunit protein uS4 (Chromohalobacter salexigens (strain ATCC BAA-138 / DSM 3043 / CIP 106854 / NCIMB 13768 / 1H11)).